The primary structure comprises 1502 residues: tRNA (32-2'-O)-methyltransferase regulator trm732 (1502 aa).

The protein belongs to the THADA family.

The protein localises to the cytoplasm. The protein resides in the nucleus. Functionally, together with methyltransferase trm7, methylates the 2'-O-ribose of nucleotides at position 32 of the anticodon loop of substrate tRNAs. The polypeptide is tRNA (32-2'-O)-methyltransferase regulator trm732 (Schizosaccharomyces pombe (strain 972 / ATCC 24843) (Fission yeast)).